The following is a 120-amino-acid chain: Ribosome-binding factor A (120 aa).

This sequence belongs to the RbfA family. Monomer. Binds 30S ribosomal subunits, but not 50S ribosomal subunits or 70S ribosomes.

The protein resides in the cytoplasm. Its function is as follows. One of several proteins that assist in the late maturation steps of the functional core of the 30S ribosomal subunit. Associates with free 30S ribosomal subunits (but not with 30S subunits that are part of 70S ribosomes or polysomes). Required for efficient processing of 16S rRNA. May interact with the 5'-terminal helix region of 16S rRNA. The sequence is that of Ribosome-binding factor A from Rickettsia peacockii (strain Rustic).